Here is a 164-residue protein sequence, read N- to C-terminus: Photosystem II extrinsic protein V (164 aa).

An N-terminal signal peptide occupies residues 1–27 (MNRISIYRIKVLAFLFAVSTYVYPASS). Residues C64, C67, H68, and H119 each contribute to the heme c site.

Belongs to the cytochrome c family. PsbV subfamily. In terms of assembly, PSII is composed of 1 copy each of membrane proteins PsbA, PsbB, PsbC, PsbD, PsbE, PsbF, PsbH, PsbI, PsbJ, PsbK, PsbL, PsbM, PsbT, PsbY, PsbZ, Psb30/Ycf12, at least 3 peripheral proteins of the oxygen-evolving complex and a large number of cofactors. It forms dimeric complexes. The extrinsic subunits in red algae are PsbO (OEC33), PsbQ', cytochrome c-550 and PsbU. Heme c is required as a cofactor.

Its subcellular location is the plastid. It localises to the chloroplast thylakoid membrane. In terms of biological role, one of the extrinsic, lumenal subunits of photosystem II (PSII). PSII is a light-driven water plastoquinone oxidoreductase, using light energy to abstract electrons from H(2)O, generating a proton gradient subsequently used for ATP formation. The extrinsic proteins stabilize the structure of photosystem II oxygen-evolving complex (OEC), the ion environment of oxygen evolution and protect the OEC against heat-induced inactivation. In Cyanidium caldarium (Red alga), this protein is Photosystem II extrinsic protein V.